The chain runs to 511 residues: Histidine ammonia-lyase (511 aa).

A cross-link (5-imidazolinone (Ala-Gly)) is located at residues 142-144 (ASG). A 2,3-didehydroalanine (Ser) modification is found at Ser143.

The protein belongs to the PAL/histidase family. Contains an active site 4-methylidene-imidazol-5-one (MIO), which is formed autocatalytically by cyclization and dehydration of residues Ala-Ser-Gly.

It is found in the cytoplasm. It catalyses the reaction L-histidine = trans-urocanate + NH4(+). The protein operates within amino-acid degradation; L-histidine degradation into L-glutamate; N-formimidoyl-L-glutamate from L-histidine: step 1/3. The protein is Histidine ammonia-lyase of Caulobacter sp. (strain K31).